Reading from the N-terminus, the 316-residue chain is Ribosomal RNA small subunit methyltransferase H (316 aa).

S-adenosyl-L-methionine is bound by residues 37-39 (GGH), D56, F83, D106, and H113. Residues 276–316 (PILPSEEETKENPASRSAKLRVLRKTKSADKKYKKENSKEE) form a disordered region. Residues 302–316 (KSADKKYKKENSKEE) are compositionally biased toward basic and acidic residues.

It belongs to the methyltransferase superfamily. RsmH family.

The protein localises to the cytoplasm. The catalysed reaction is cytidine(1402) in 16S rRNA + S-adenosyl-L-methionine = N(4)-methylcytidine(1402) in 16S rRNA + S-adenosyl-L-homocysteine + H(+). Functionally, specifically methylates the N4 position of cytidine in position 1402 (C1402) of 16S rRNA. This is Ribosomal RNA small subunit methyltransferase H from Leptospira borgpetersenii serovar Hardjo-bovis (strain L550).